The chain runs to 122 residues: UPF0344 protein BcerKBAB4_1054 (122 aa).

Helical transmembrane passes span 6–26 (ITAW…YSAG), 38–58 (LMYI…VKTA), 65–85 (WYGM…MVLV), and 92–112 (PTGA…YLGL).

The protein belongs to the UPF0344 family.

The protein localises to the cell membrane. The protein is UPF0344 protein BcerKBAB4_1054 of Bacillus mycoides (strain KBAB4) (Bacillus weihenstephanensis).